The following is a 473-amino-acid chain: High-affinity proline transporter PutP (473 aa).

A run of 12 helical transmembrane segments spans residues L32 to F52, L56 to V76, I114 to L134, G146 to V166, F171 to H191, V218 to I238, I256 to I276, I299 to S319, L350 to W370, I376 to L396, G408 to L428, and F431 to I451.

The protein belongs to the sodium:solute symporter (SSF) (TC 2.A.21) family.

The protein resides in the cell membrane. The enzyme catalyses L-proline(in) + Na(+)(in) = L-proline(out) + Na(+)(out). Its function is as follows. Catalyzes the high-affinity uptake of extracellular proline. Important for the use of proline as a sole carbon and energy source or a sole nitrogen source. The protein is High-affinity proline transporter PutP of Bacillus subtilis (strain 168).